We begin with the raw amino-acid sequence, 686 residues long: Acyl-CoA synthetase short-chain family member 3, mitochondrial (686 aa).

Residues 1-29 constitute a mitochondrion transit peptide; that stretch reads MKPSWLQCRKVTSAGGLGGPLPGSSPARG. 227–230 serves as a coordination point for CoA; it reads EPGR. Residues 425-427 and 446-451 each bind ATP; these read GER and DHWWQT. At Lys-518 the chain carries N6-succinyllysine. The residue at position 524 (Lys-524) is an N6-acetyllysine. 3 residues coordinate ATP: Asp-539, Arg-554, and Arg-565. Arg-624 provides a ligand contact to CoA.

The protein belongs to the ATP-dependent AMP-binding enzyme family.

It localises to the mitochondrion matrix. It carries out the reaction acetate + ATP + CoA = acetyl-CoA + AMP + diphosphate. It catalyses the reaction propanoate + ATP + CoA = propanoyl-CoA + AMP + diphosphate. The catalysed reaction is butanoate + ATP + CoA = butanoyl-CoA + AMP + diphosphate. In terms of biological role, catalyzes the synthesis of acetyl-CoA from short-chain fatty acids. Propionate is the preferred substrate. Can utilize acetate and butyrate with a much lower affinity. The sequence is that of Acyl-CoA synthetase short-chain family member 3, mitochondrial (ACSS3) from Homo sapiens (Human).